Here is a 485-residue protein sequence, read N- to C-terminus: Aspartyl/glutamyl-tRNA(Asn/Gln) amidotransferase subunit B (485 aa).

Belongs to the GatB/GatE family. GatB subfamily. As to quaternary structure, heterotrimer of A, B and C subunits.

The catalysed reaction is L-glutamyl-tRNA(Gln) + L-glutamine + ATP + H2O = L-glutaminyl-tRNA(Gln) + L-glutamate + ADP + phosphate + H(+). It catalyses the reaction L-aspartyl-tRNA(Asn) + L-glutamine + ATP + H2O = L-asparaginyl-tRNA(Asn) + L-glutamate + ADP + phosphate + 2 H(+). In terms of biological role, allows the formation of correctly charged Asn-tRNA(Asn) or Gln-tRNA(Gln) through the transamidation of misacylated Asp-tRNA(Asn) or Glu-tRNA(Gln) in organisms which lack either or both of asparaginyl-tRNA or glutaminyl-tRNA synthetases. The reaction takes place in the presence of glutamine and ATP through an activated phospho-Asp-tRNA(Asn) or phospho-Glu-tRNA(Gln). The polypeptide is Aspartyl/glutamyl-tRNA(Asn/Gln) amidotransferase subunit B (Borreliella afzelii (strain PKo) (Borrelia afzelii)).